The chain runs to 438 residues: LIM domain-containing protein C4F6.12 (438 aa).

Disordered stretches follow at residues 1 to 37 (MHSP…NNLV) and 49 to 78 (TGGR…TIKQ). The span at 24-37 (SPVSTNGSPLNNLV) shows a compositional bias: polar residues. Phosphoserine occurs at positions 67 and 96. LIM zinc-binding domains follow at residues 256-316 (KSCH…QFSP), 318-375 (CKHC…NKYA), and 376-435 (VKCK…SVKF).

The polypeptide is LIM domain-containing protein C4F6.12 (Schizosaccharomyces pombe (strain 972 / ATCC 24843) (Fission yeast)).